Consider the following 472-residue polypeptide: Sulfate adenylyltransferase subunit 1 (472 aa).

One can recognise a tr-type G domain in the interval 24–240; it reads KSLLRFLTCG…ENAEVGTRDL (217 aa). Residues 33–40 form a G1 region; that stretch reads GSVDDGKS. GTP is bound at residue 33–40; the sequence is GSVDDGKS. The segment at 91–95 is G2; the sequence is GITID. A G3 region spans residues 112–115; sequence DTPG. GTP is bound by residues 112–116 and 167–170; these read DTPGH and NKMD. Residues 167-170 are G4; that stretch reads NKMD. Residues 204 to 206 form a G5 region; that stretch reads SAL.

The protein belongs to the TRAFAC class translation factor GTPase superfamily. Classic translation factor GTPase family. CysN/NodQ subfamily. In terms of assembly, heterodimer composed of CysD, the smaller subunit, and CysN.

It catalyses the reaction sulfate + ATP + H(+) = adenosine 5'-phosphosulfate + diphosphate. It participates in sulfur metabolism; hydrogen sulfide biosynthesis; sulfite from sulfate: step 1/3. Functionally, with CysD forms the ATP sulfurylase (ATPS) that catalyzes the adenylation of sulfate producing adenosine 5'-phosphosulfate (APS) and diphosphate, the first enzymatic step in sulfur assimilation pathway. APS synthesis involves the formation of a high-energy phosphoric-sulfuric acid anhydride bond driven by GTP hydrolysis by CysN coupled to ATP hydrolysis by CysD. The protein is Sulfate adenylyltransferase subunit 1 of Tolumonas auensis (strain DSM 9187 / NBRC 110442 / TA 4).